The sequence spans 473 residues: Cannabinoid receptor 1 (473 aa).

Residues 1–121 (MKSILDGLAD…LNPSQQLAIA (121 aa)) lie on the Extracellular side of the membrane. Positions 2 to 23 (KSILDGLADTTFRTITTDLLYV) are required for mitochondrial localization. N-linked (GlcNAc...) asparagine glycosylation is found at asparagine 78 and asparagine 84. The helical transmembrane segment at 122-142 (VLSLTLGTFTVLENLLVLCVI) threads the bilayer. Residues 143-155 (LHSRSLRCRPSYH) lie on the Cytoplasmic side of the membrane. A helical transmembrane segment spans residues 156–176 (FIGSLAVADLLGSVIFVYSFV). Over 177–188 (DFHVFHRKDSPN) the chain is Extracellular. A helical membrane pass occupies residues 189-209 (VFLFKLGGVTASFTASVGSLF). Over 210 to 233 (LTAIDRYISIHRPLAYKRIVTRPK) the chain is Cytoplasmic. Residues 234–254 (AVVAFCLMWTIAIVIAVLPLL) traverse the membrane as a helical segment. Residues 255-278 (GWNCKKLQSVCSDIFPLIDETYLM) are Extracellular-facing. A helical transmembrane segment spans residues 279-299 (FWIGVTSVLLLFIVYAYMYIL). Topologically, residues 300 to 345 (WKAHSHAVRMIQRGTQKSIIIHTSEDGKVQVTRPDQARMDIRLAKT) are cytoplasmic. Residues 346-366 (LVLILVVLIICWGPLLAIMVY) traverse the membrane as a helical segment. The Extracellular segment spans residues 367-378 (DVFGKMNKLIKT). A helical transmembrane segment spans residues 379–399 (VFAFCSMLCLLNSTVNPIIYA). Over 400 to 473 (LRSKDLRHAF…VSTDTSAEAL (74 aa)) the chain is Cytoplasmic. Cysteine 416 is lipidated: S-palmitoyl cysteine. Residues serine 426 and serine 430 each carry the phosphoserine modification.

The protein belongs to the G-protein coupled receptor 1 family. As to quaternary structure, interacts (via C-terminus) with CNRIP1. Associates with G protein alpha subunits, including G(i) alpha-1/GNAI1, G(i) alpha-3/GNAI3 and G(o)-alpha/GNAO1; palmitoylation is important for interaction with GNAI3 and GNAO1. Post-translationally, palmitoylation at Cys-416 is important for recruitment at both plasma membrane and lipid rafts and association with G protein alpha subunits. As to expression, expressed in brain neurons (at protein level). Detected throughout the striatum, cortex and hippocampus, with highest levels in the lateral striatum. In rostral brain regions, high expression levels in the dorsal lateral striatum, while in the caudal brain regions, high levels are observed in the ventral lateral striatum. Expressed in neurons. In the hypothalamus, expressed in both GABAergic and glutamatergic presynaptic terminals of POMC neurons (at protein level). Expressed in striated muscles, including skeletal muscles (gastrocnemius and rectus abdominis) and myocardium (at protein level). Expressed in the liver, with highest levels in Kupffer cells and lower levels in endothelial cells as well as hepatocytes, particularly in perivascular areas (at protein level). The hepatic expression level is up-regulated in obese mice compared to lean animals.

It is found in the cell membrane. The protein resides in the mitochondrion outer membrane. The protein localises to the cell projection. It localises to the axon. Its subcellular location is the presynapse. With respect to regulation, hemopressin, a peptide derived from hemoglobin subunit alpha (HBA1 and/or HBA2), acts as an antagonist peptide: hemopressin-binding efficiently blocks cannabinoid receptor CNR1 and subsequent signaling. G-protein coupled receptor for cannabinoids, including endocannabinoids (eCBs), such as N-arachidonoylethanolamide (also called anandamide or AEA) and 2-arachidonoylglycerol (2-AG). Mediates many cannabinoid-induced effects, acting, among others, on food intake, memory loss, gastrointestinal motility, catalepsy, ambulatory activity, anxiety, chronic pain. Signaling typically involves reduction in cyclic AMP. In the hypothalamus, may have a dual effect on mitochondrial respiration depending upon the agonist dose and possibly upon the cell type. Increases respiration at low doses, while decreases respiration at high doses. At high doses, CNR1 signal transduction involves G-protein alpha-i protein activation and subsequent inhibition of mitochondrial soluble adenylate cyclase, decrease in cyclic AMP concentration, inhibition of protein kinase A (PKA)-dependent phosphorylation of specific subunits of the mitochondrial electron transport system, including NDUFS2. In the hypothalamus, inhibits leptin-induced reactive oxygen species (ROS) formation and mediates cannabinoid-induced increase in SREBF1 and FASN gene expression. In response to cannabinoids, drives the release of orexigenic beta-endorphin, but not that of melanocyte-stimulating hormone alpha/alpha-MSH, from hypothalamic POMC neurons, hence promoting food intake. In the hippocampus, regulates cellular respiration and energy production in response to cannabinoids. Involved in cannabinoid-dependent depolarization-induced suppression of inhibition (DSI), a process in which depolarization of CA1 postsynaptic pyramidal neurons mobilizes eCBs, which retrogradely activate presynaptic CB1 receptors, transiently decreasing GABAergic inhibitory neurotransmission. Also reduces excitatory synaptic transmission. In superior cervical ganglions and cerebral vascular smooth muscle cells, inhibits voltage-gated Ca(2+) channels in a constitutive, as well as agonist-dependent manner. In cerebral vascular smooth muscle cells, cannabinoid-induced inhibition of voltage-gated Ca(2+) channels leads to vasodilation and decreased vascular tone. Induces leptin production in adipocytes and reduces LRP2-mediated leptin clearance in the kidney, hence participating in hyperleptinemia. In adipose tissue, CNR1 signaling leads to increased expression of SREBF1, ACACA and FASN genes. In the liver, activation by endocannabinoids leads to increased de novo lipogenesis and reduced fatty acid catabolism, associated with increased expression of SREBF1/SREBP-1, GCK, ACACA, ACACB and FASN genes. May also affect de novo cholesterol synthesis and HDL-cholesteryl ether uptake. Peripherally modulates energy metabolism. In high carbohydrate diet-induced obesity, may decrease the expression of mitochondrial dihydrolipoyl dehydrogenase/DLD in striated muscles, as well as that of selected glucose/ pyruvate metabolic enzymes, hence affecting energy expenditure through mitochondrial metabolism. In response to cannabinoid anandamide, elicits a pro-inflammatory response in macrophages, which involves NLRP3 inflammasome activation and IL1B and IL18 secretion. In macrophages infiltrating pancreatic islets, this process may participate in the progression of type-2 diabetes and associated loss of pancreatic beta-cells. The chain is Cannabinoid receptor 1 (Cnr1) from Mus musculus (Mouse).